The sequence spans 126 residues: Holo-[acyl-carrier-protein] synthase (126 aa).

Asp-9 and Glu-58 together coordinate Mg(2+).

It belongs to the P-Pant transferase superfamily. AcpS family. Requires Mg(2+) as cofactor.

It localises to the cytoplasm. It catalyses the reaction apo-[ACP] + CoA = holo-[ACP] + adenosine 3',5'-bisphosphate + H(+). Transfers the 4'-phosphopantetheine moiety from coenzyme A to a Ser of acyl-carrier-protein. This chain is Holo-[acyl-carrier-protein] synthase, found in Serratia proteamaculans (strain 568).